The sequence spans 513 residues: GMP synthase [glutamine-hydrolyzing] (513 aa).

The Glutamine amidotransferase type-1 domain occupies 9–198 (LILVLDFGSQ…VRRVCECKGQ (190 aa)). C86 (nucleophile) is an active-site residue. Residues H172 and E174 contribute to the active site. Positions 199-388 (WTMENFIEIE…LGIPEHLVWR (190 aa)) constitute a GMPS ATP-PPase domain. 226-232 (SGGVDSS) provides a ligand contact to ATP.

In terms of assembly, homodimer.

It catalyses the reaction XMP + L-glutamine + ATP + H2O = GMP + L-glutamate + AMP + diphosphate + 2 H(+). It functions in the pathway purine metabolism; GMP biosynthesis; GMP from XMP (L-Gln route): step 1/1. Functionally, catalyzes the synthesis of GMP from XMP. In Staphylococcus aureus (strain MSSA476), this protein is GMP synthase [glutamine-hydrolyzing].